The following is a 201-amino-acid chain: MVYSVGLTGNIASGKSTVAEFFSELGINVIYADKIAKELTSKNTPCYQDIISHFGSSVVLNNGELDRKRIRDIIFSNSNERLWLESLLHPVIREKIEEQLIACTSPYCLIEIPLLFNKHHYPYLQKVLLVIAPLESQLDRIVKRDHCTKKQALAILATQPNLEQRLEAADDVLINESGLSELKAKVNKLHQKYLREAKIKQ.

Residues 4-201 (SVGLTGNIAS…KYLREAKIKQ (198 aa)) enclose the DPCK domain. 12–17 (ASGKST) serves as a coordination point for ATP.

Belongs to the CoaE family.

Its subcellular location is the cytoplasm. It carries out the reaction 3'-dephospho-CoA + ATP = ADP + CoA + H(+). The protein operates within cofactor biosynthesis; coenzyme A biosynthesis; CoA from (R)-pantothenate: step 5/5. In terms of biological role, catalyzes the phosphorylation of the 3'-hydroxyl group of dephosphocoenzyme A to form coenzyme A. The polypeptide is Dephospho-CoA kinase (Legionella pneumophila (strain Paris)).